Consider the following 235-residue polypeptide: Cytidylate kinase (235 aa).

16 to 24 (GPAASGKST) serves as a coordination point for ATP.

This sequence belongs to the cytidylate kinase family. Type 1 subfamily.

The protein localises to the cytoplasm. The catalysed reaction is CMP + ATP = CDP + ADP. It catalyses the reaction dCMP + ATP = dCDP + ADP. The chain is Cytidylate kinase from Chlorobaculum tepidum (strain ATCC 49652 / DSM 12025 / NBRC 103806 / TLS) (Chlorobium tepidum).